Here is a 1357-residue protein sequence, read N- to C-terminus: Regulator of V-ATPase in vacuolar membrane protein 1 (1357 aa).

WD repeat units follow at residues 98 to 134 (HDDT…GVYQ), 142 to 182 (KQPK…GEQA), 190 to 239 (PHPK…KNHT), 384 to 423 (GHNK…HGVS), 431 to 470 (QTES…KEDS), 595 to 636 (INTG…LEYE), 638 to 679 (TFHN…YTNN), and 898 to 939 (QKSI…RIAY). The disordered stretch occupies residues 1243-1357 (GSPSASDIES…ITKNLLDDFV (115 aa)). S1244 and S1248 each carry phosphoserine. The span at 1272–1288 (STSSNSLAQSSSSAPRS) shows a compositional bias: low complexity. Basic and acidic residues predominate over residues 1320-1332 (SENRKDKLSKDIL).

In terms of assembly, component of the RAVE complex composed of RAV1, RAV2 and CBF3D/SKP1. Within the complex, it interacts directly with RAV2 and CBF3D. Interacts with the V-ATPase V1 subunits VMA1, VMA2 and VMA8.

Its subcellular location is the endomembrane system. Component of the RAVE complex, which is required for stable assembly of the vacuolar ATPase complex V-ATPase under many conditions. Required for transport between the early endosome and the late endosome/prevacuolar compartment (PVC), suggesting that assembly of vacuolar ATPase at the early endosome is required for transport from the early endosome to the PVC. The chain is Regulator of V-ATPase in vacuolar membrane protein 1 (RAV1) from Saccharomyces cerevisiae (strain ATCC 204508 / S288c) (Baker's yeast).